The following is a 345-amino-acid chain: MTVIVPIHSPAVAPAPAPERVGVLLVNLGTPDSCDTKGVRIYLREFLSDPRVIENQGLFWKLALNGLILQTRPARKAKDYQKIWNHEKNESPLKTITRAQAHKLATSLSDRGHLVVDWAMRYGNPSMRSRIEAMVAKGCSRLLVVPLYPQYSAATSATVCDQAFRVLSELRAQPTMRVAPPYFRDSAYIDALANSIRSHLASLPFEPEIIVASFHGMPQAYIEKGDPYQAQCIATVDALRERMGLGDNKLLLTFQSRFGFDEWLQPYTDQTIQKLANDGVKRLAVVMPGFASDCLETLEEIAQENAETFLHNGGEHFSAVPCLNDSDGGIAVIRQLVLRELQGWL.

Fe cation contacts are provided by H215 and E296.

This sequence belongs to the ferrochelatase family.

Its subcellular location is the cytoplasm. It catalyses the reaction heme b + 2 H(+) = protoporphyrin IX + Fe(2+). It functions in the pathway porphyrin-containing compound metabolism; protoheme biosynthesis; protoheme from protoporphyrin-IX: step 1/1. Catalyzes the ferrous insertion into protoporphyrin IX. This Rhodopseudomonas palustris (strain BisA53) protein is Ferrochelatase.